A 328-amino-acid polypeptide reads, in one-letter code: Isopenicillin N synthase (328 aa).

4 residues coordinate isopenicillin N: Arg85, Tyr89, Ser181, and Tyr187. N-[(5S)-5-amino-5-carboxypentanoyl]-L-cysteinyl-D-valine contacts are provided by Arg85, Tyr89, Ser181, Tyr187, His210, and Asp212. Positions 178 to 284 (TLSSVSLIRY…RLSLPFFFHA (107 aa)) constitute a Fe2OG dioxygenase domain. Fe(2+)-binding residues include His210, Asp212, and His266. Residue Arg275 participates in 2-oxoglutarate binding. Position 277 (Ser277) interacts with isopenicillin N. Ser277 serves as a coordination point for N-[(5S)-5-amino-5-carboxypentanoyl]-L-cysteinyl-D-valine.

The protein belongs to the iron/ascorbate-dependent oxidoreductase family. The cofactor is Fe cation. Requires L-ascorbate as cofactor.

The enzyme catalyses N-[(5S)-5-amino-5-carboxypentanoyl]-L-cysteinyl-D-valine + O2 = isopenicillin N + 2 H2O. Its pathway is antibiotic biosynthesis; penicillin G biosynthesis; penicillin G from L-alpha-aminoadipate and L-cysteine and L-valine: step 2/3. Its function is as follows. Removes, in the presence of oxygen, 4 hydrogen atoms from delta-L-(alpha-aminoadipyl)-L-cysteinyl-D-valine (ACV) to form the azetidinone and thiazolidine rings of isopenicillin. The sequence is that of Isopenicillin N synthase (pcbC) from Amycolatopsis lactamdurans (Nocardia lactamdurans).